A 180-amino-acid polypeptide reads, in one-letter code: Adenine phosphoribosyltransferase (180 aa).

Belongs to the purine/pyrimidine phosphoribosyltransferase family. In terms of assembly, homodimer.

Its subcellular location is the cytoplasm. It carries out the reaction AMP + diphosphate = 5-phospho-alpha-D-ribose 1-diphosphate + adenine. The protein operates within purine metabolism; AMP biosynthesis via salvage pathway; AMP from adenine: step 1/1. Functionally, catalyzes a salvage reaction resulting in the formation of AMP, that is energically less costly than de novo synthesis. This chain is Adenine phosphoribosyltransferase, found in Haemophilus influenzae (strain 86-028NP).